Here is a 156-residue protein sequence, read N- to C-terminus: SsrA-binding protein (156 aa).

It belongs to the SmpB family.

It is found in the cytoplasm. In terms of biological role, required for rescue of stalled ribosomes mediated by trans-translation. Binds to transfer-messenger RNA (tmRNA), required for stable association of tmRNA with ribosomes. tmRNA and SmpB together mimic tRNA shape, replacing the anticodon stem-loop with SmpB. tmRNA is encoded by the ssrA gene; the 2 termini fold to resemble tRNA(Ala) and it encodes a 'tag peptide', a short internal open reading frame. During trans-translation Ala-aminoacylated tmRNA acts like a tRNA, entering the A-site of stalled ribosomes, displacing the stalled mRNA. The ribosome then switches to translate the ORF on the tmRNA; the nascent peptide is terminated with the 'tag peptide' encoded by the tmRNA and targeted for degradation. The ribosome is freed to recommence translation, which seems to be the essential function of trans-translation. The chain is SsrA-binding protein from Clostridium beijerinckii (strain ATCC 51743 / NCIMB 8052) (Clostridium acetobutylicum).